Here is a 158-residue protein sequence, read N- to C-terminus: 6,7-dimethyl-8-ribityllumazine synthase (158 aa).

Residues phenylalanine 23, 61–63 (SFE), and 85–87 (AVI) contribute to the 5-amino-6-(D-ribitylamino)uracil site. Position 90-91 (90-91 (ET)) interacts with (2S)-2-hydroxy-3-oxobutyl phosphate. Histidine 93 acts as the Proton donor in catalysis. Phenylalanine 118 contacts 5-amino-6-(D-ribitylamino)uracil. Arginine 132 contributes to the (2S)-2-hydroxy-3-oxobutyl phosphate binding site.

This sequence belongs to the DMRL synthase family.

The catalysed reaction is (2S)-2-hydroxy-3-oxobutyl phosphate + 5-amino-6-(D-ribitylamino)uracil = 6,7-dimethyl-8-(1-D-ribityl)lumazine + phosphate + 2 H2O + H(+). It functions in the pathway cofactor biosynthesis; riboflavin biosynthesis; riboflavin from 2-hydroxy-3-oxobutyl phosphate and 5-amino-6-(D-ribitylamino)uracil: step 1/2. In terms of biological role, catalyzes the formation of 6,7-dimethyl-8-ribityllumazine by condensation of 5-amino-6-(D-ribitylamino)uracil with 3,4-dihydroxy-2-butanone 4-phosphate. This is the penultimate step in the biosynthesis of riboflavin. The protein is 6,7-dimethyl-8-ribityllumazine synthase of Prochlorococcus marinus subsp. pastoris (strain CCMP1986 / NIES-2087 / MED4).